A 710-amino-acid polypeptide reads, in one-letter code: Interferon-induced GTP-binding protein Mx2 (710 aa).

The tract at residues 1-51 is disordered; that stretch reads MSMSFRPLKYKRHTQTSTQHHPKQDIYFHQQPPGPPLGQTMSPPQWQVEES. The segment covering 39 to 50 has biased composition (polar residues); sequence QTMSPPQWQVEE. Residues 112-383 form the Dynamin-type G domain; that stretch reads DLALPAIAVI…LIWHINKSLP (272 aa). The G1 motif stretch occupies residues 122-129; it reads GDQSSGKS. Residue 122–129 coordinates GTP; sequence GDQSSGKS. Residues 147–149 form a G2 motif region; that stretch reads ITR. A G3 motif region spans residues 221 to 224; the sequence is DLPG. Residues 221-225 and 290-293 contribute to the GTP site; these read DLPGI and TKPD. Residues 290 to 293 form a G4 motif region; that stretch reads TKPD. The tract at residues 322–325 is G5 motif; that stretch reads KCRG. In terms of domain architecture, GED spans 619–710; sequence IVEIGVHLNA…ALYEFPHFKG (92 aa).

The protein belongs to the TRAFAC class dynamin-like GTPase superfamily. Dynamin/Fzo/YdjA family.

Its subcellular location is the cytoplasm. The protein resides in the nucleus. Interferon-induced dynamin-like GTPase with antiviral activity against vesicular stomatitis virus (VSV). The sequence is that of Interferon-induced GTP-binding protein Mx2 (MX2) from Bos taurus (Bovine).